The chain runs to 66 residues: Large ribosomal subunit protein bL35 (66 aa).

The span at 1-26 (MPKMKTHRGSAKRFKKTASGKLKRGH) shows a compositional bias: basic residues. The tract at residues 1–28 (MPKMKTHRGSAKRFKKTASGKLKRGHAY) is disordered.

Belongs to the bacterial ribosomal protein bL35 family.

The protein is Large ribosomal subunit protein bL35 of Geobacillus thermodenitrificans (strain NG80-2).